We begin with the raw amino-acid sequence, 114 residues long: MRLLILALLGICSLTAYIVEGVGSEVSDKRTCVSLTTQRLPVSRIKTYTITEGSLRAVIFITKRGLKVCADPQATWVRDVVRSMDRKSNTRNNMIQTKPTGTQQSTNTAVTLTG.

The first 21 residues, 1–21, serve as a signal peptide directing secretion; the sequence is MRLLILALLGICSLTAYIVEG. A disulfide bond links cysteine 32 and cysteine 69. The disordered stretch occupies residues 91–114; it reads RNNMIQTKPTGTQQSTNTAVTLTG.

Belongs to the intercrine gamma family. In terms of tissue distribution, highest level in spleen, lower in peripheral leukocytes and very low levels in lung, colon and small intestine.

It localises to the secreted. Chemotactic activity for lymphocytes but not for monocytes or neutrophils. In thymus, mediates medullary accumulation of thymic dendritic cells and contributes to regulatoy T cell development, playing a role in self-tolerance establishment. This chain is Lymphotactin (XCL1), found in Homo sapiens (Human).